The following is a 340-amino-acid chain: MVTLRKRTLKVLTFLVLFIFLTSFFLNYSHTMVATTWFPKQMVLELSENLKRLIKHRPCTCTHCIGQRKLSAWFDERFNQTVQPLLTAQNALLEDDTYRWWLRLQREKKPNNLNDTIKELFRVVPGNVDPMLEKRSVGCRRCAVVGNSGNLRESSYGPEIDSHDFVLRMNKAPTAGFEADVGTKTTHHLVYPESFRELGDNVSMILVPFKTIDLEWVVSAITTGTISHTYTPVLVKIRVKQDKILIYHPAFIKYVFDNWLQGHGRYPSTGILSVIFSMHVCDEVDLYGFGADSKGNWHHYWENNPSAGAFRKTGVHDADFESNVTATLAAINKIRIFKGR.

Residues 1-13 are Cytoplasmic-facing; it reads MVTLRKRTLKVLT. The helical; Signal-anchor for type II membrane protein transmembrane segment at 14–34 threads the bilayer; sequence FLVLFIFLTSFFLNYSHTMVA. At 35–340 the chain is on the lumenal side; the sequence is TTWFPKQMVL…INKIRIFKGR (306 aa). 3 disulfide bridges follow: cysteine 59–cysteine 64, cysteine 61–cysteine 139, and cysteine 142–cysteine 281. An N-linked (GlcNAc...) asparagine glycan is attached at asparagine 79. Glutamine 105 contributes to the substrate binding site. Asparagine 114 is a glycosylation site (N-linked (GlcNAc...) asparagine). Substrate-binding residues include asparagine 147 and asparagine 170. An N-linked (GlcNAc...) asparagine glycan is attached at asparagine 201. Substrate contacts are provided by tyrosine 230, tyrosine 266, glycine 270, glycine 290, histidine 299, and histidine 316. N-linked (GlcNAc...) asparagine glycosylation occurs at asparagine 323.

This sequence belongs to the glycosyltransferase 29 family. Post-translationally, the soluble form derives from the membrane form by proteolytic processing.

The protein localises to the golgi apparatus. It is found in the golgi stack membrane. The protein resides in the trans-Golgi network membrane. It localises to the secreted. It carries out the reaction a beta-D-galactosyl-(1-&gt;3)-N-acetyl-alpha-D-galactosaminyl derivative + CMP-N-acetyl-beta-neuraminate = an N-acetyl-alpha-neuraminyl-(2-&gt;3)-beta-D-galactosyl-(1-&gt;3)-N-acetyl-alpha-D-galactosaminyl derivative + CMP + H(+). The catalysed reaction is a ganglioside GM1 + CMP-N-acetyl-beta-neuraminate = a ganglioside GD1a + CMP + H(+). The enzyme catalyses a ganglioside GM1 (d18:1(4E)) + CMP-N-acetyl-beta-neuraminate = a ganglioside GD1a (d18:1(4E)) + CMP + H(+). It catalyses the reaction ganglioside GM1 (d18:1(4E)/18:0) + CMP-N-acetyl-beta-neuraminate = ganglioside GD1a (18:1(4E)/18:0) + CMP + H(+). It carries out the reaction a ganglioside GA1 + CMP-N-acetyl-beta-neuraminate = a ganglioside GM1b + CMP + H(+). The catalysed reaction is a ganglioside GA1 (d18:1(4E)) + CMP-N-acetyl-beta-neuraminate = a ganglioside GM1b (d18:1(4E)) + CMP + H(+). The enzyme catalyses a ganglioside GD1b + CMP-N-acetyl-beta-neuraminate = a ganglioside GT1b + CMP + H(+). It catalyses the reaction a 3-O-[beta-D-galactosyl-(1-&gt;3)-N-acetyl-alpha-D-galactosaminyl]-L-threonyl-[protein] + CMP-N-acetyl-beta-neuraminate = a 3-O-[N-acetyl-alpha-neuraminyl-(2-&gt;3)-beta-D-galactosyl-(1-&gt;3)-N-acetyl-alpha-D-galactosaminyl]-L-threonyl-[protein] + CMP + H(+). It carries out the reaction a 3-O-[beta-D-galactosyl-(1-&gt;3)-N-acetyl-alpha-D-galactosaminyl]-L-seryl-[protein] + CMP-N-acetyl-beta-neuraminate = 3-O-[N-acetyl-alpha-neuraminyl-(2-&gt;3)-beta-D-galactosyl-(1-&gt;3)-N-acetyl-alpha-D-galactosaminyl]-L-seryl-[protein] + CMP + H(+). It participates in protein modification; protein glycosylation. It functions in the pathway glycolipid biosynthesis. Its function is as follows. A beta-galactoside alpha2-&gt;3 sialyltransferase involved in terminal sialylation of glycoproteins and glycolipids. Catalyzes the transfer of sialic acid (N-acetyl-neuraminic acid; Neu5Ac) from the nucleotide sugar donor CMP-Neu5Ac onto acceptor Galbeta-(1-&gt;3)-GalNAc-terminated glycoconjugates through an alpha2-3 linkage. Adds sialic acid to the core 1 O-glycan, Galbeta-(1-&gt;3)-GalNAc-O-Ser/Thr, which is a major structure of mucin-type O-glycans. As part of a homeostatic mechanism that regulates CD8-positive T cell numbers, sialylates core 1 O-glycans of T cell glycoproteins, SPN/CD43 and PTPRC/CD45. Prevents premature apoptosis of thymic CD8-positive T cells prior to peripheral emigration, whereas in the secondary lymphoid organs controls the survival of CD8-positive memory T cells generated following a successful immune response. Transfers sialic acid to asialofetuin, presumably onto Galbeta-(1-&gt;3)-GalNAc-O-Ser. Sialylates GM1a, GA1 and GD1b gangliosides to form GD1a, GM1b and GT1b, respectively. The chain is CMP-N-acetylneuraminate-beta-galactosamide-alpha-2,3-sialyltransferase 1 (ST3GAL1) from Pan troglodytes (Chimpanzee).